We begin with the raw amino-acid sequence, 295 residues long: Iron-sulfur cluster carrier protein (295 aa).

Residue 38–45 coordinates ATP; it reads GKGGVGKS.

The protein belongs to the Mrp/NBP35 ATP-binding proteins family. In terms of assembly, homodimer.

Binds and transfers iron-sulfur (Fe-S) clusters to target apoproteins. Can hydrolyze ATP. In Pyrococcus furiosus (strain ATCC 43587 / DSM 3638 / JCM 8422 / Vc1), this protein is Iron-sulfur cluster carrier protein.